The sequence spans 361 residues: Putative F-box protein At3g19560 (361 aa).

In terms of domain architecture, F-box spans 3–49; sequence MTMMSDISQDLLEEILSRVPITSLRAVKSTCKRWKDLLNDPSFSKKY.

This is Putative F-box protein At3g19560 from Arabidopsis thaliana (Mouse-ear cress).